A 238-amino-acid chain; its full sequence is Ribonuclease PH (238 aa).

Phosphate is bound by residues Arg-86 and 124–126; that span reads GTR.

It belongs to the RNase PH family. As to quaternary structure, homohexameric ring arranged as a trimer of dimers.

The catalysed reaction is tRNA(n+1) + phosphate = tRNA(n) + a ribonucleoside 5'-diphosphate. Phosphorolytic 3'-5' exoribonuclease that plays an important role in tRNA 3'-end maturation. Removes nucleotide residues following the 3'-CCA terminus of tRNAs; can also add nucleotides to the ends of RNA molecules by using nucleoside diphosphates as substrates, but this may not be physiologically important. Probably plays a role in initiation of 16S rRNA degradation (leading to ribosome degradation) during starvation. The protein is Ribonuclease PH of Acinetobacter baumannii (strain AB307-0294).